We begin with the raw amino-acid sequence, 522 residues long: Colicin-E1 (522 aa).

Disordered regions lie at residues 26–52 and 136–165; these read NGTP…AAIH and EEKA…REKA. Positions 30 to 42 are enriched in gly residues; sequence DGSGSGGGGGKGG. 2 helical membrane passes run 471–487 and 494–510; these read AADA…FSLL and IWGI…YIDK.

The protein belongs to the channel forming colicin family.

It localises to the cell membrane. Functionally, this colicin is a channel-forming colicin. This class of transmembrane toxins depolarize the cytoplasmic membrane, leading to dissipation of cellular energy. Colicins are polypeptide toxins produced by and active against E.coli and closely related bacteria. The polypeptide is Colicin-E1 (cea) (Escherichia coli).